Here is a 332-residue protein sequence, read N- to C-terminus: Alpha-N-acetylgalactosaminide alpha-2,6-sialyltransferase 6 (332 aa).

Positions 1-26 (MACPRPLSQCDHTPLPGPPAGHWPLP) are disordered. Over 1-42 (MACPRPLSQCDHTPLPGPPAGHWPLPLSRRRREMKSNKEQRS) the chain is Cytoplasmic. The helical; Signal-anchor for type II membrane protein transmembrane segment at 43–63 (AVFVILFALITILILYSSSSA) threads the bilayer. The Lumenal segment spans residues 64–332 (NEVFHYGSLR…GITFSHPSWT (269 aa)). N-linked (GlcNAc...) asparagine glycosylation is present at N97. C107 and C255 are oxidised to a cystine.

Belongs to the glycosyltransferase 29 family.

It localises to the golgi apparatus membrane. The catalysed reaction is a ganglioside GM1b (d18:1(4E)) + CMP-N-acetyl-beta-neuraminate = a ganglioside GD1alpha (d18:1(4E)) + CMP + H(+). It catalyses the reaction N-acetyl-alpha-neuraminosyl-(2-&gt;3)-beta-D-galactosyl-(1-&gt;3)-N-acetyl-beta-D-glucosaminyl-(1-&gt;3)-beta-D-galactosyl-(1-&gt;4)-beta-D-glucosyl-(1&lt;-&gt;1')-N-acyl-sphing-4-enine + CMP-N-acetyl-beta-neuraminate = N-acetyl-alpha-neuraminosyl-(2-&gt;3)-beta-D-galactosyl-(1-&gt;3)-[N-acetyl-alpha-neuraminosyl-(2-&gt;6)]-N-acetyl-beta-D-glucosaminyl-(1-&gt;3)-beta-D-galactosyl-(1-&gt;4)-beta-D-glucosyl-(1&lt;-&gt;1')-N-acyl-sphing-4-enine + CMP + H(+). It carries out the reaction a globoside MSGG + CMP-N-acetyl-beta-neuraminate = a globoside DSGG + CMP + H(+). The enzyme catalyses a ganglioside GD1a (d18:1(4E)) + CMP-N-acetyl-beta-neuraminate = a ganglioside GT1aalpha (d18:1(4E)) + CMP + H(+). The catalysed reaction is a ganglioside GT1b (d18:1(4E)) + CMP-N-acetyl-beta-neuraminate = a ganglioside GQ1balpha (d18:1(4E)) + CMP + H(+). It catalyses the reaction 3-O-[alpha-Neu5Ac-(2-&gt;3)-beta-D-Gal-(1-&gt;3)-alpha-D-GalNAc]-L-Ser-[protein] + CMP-N-acetyl-beta-neuraminate = a 3-O-{alpha-Neu5Ac-(2-&gt;3)-beta-D-Gal-(1-&gt;3)-[alpha-Neu5Ac-(2-&gt;6)]-alpha-D-GalNAc}-L-seryl-[protein] + CMP + H(+). It carries out the reaction 3-O-[alpha-Neu5Ac-(2-&gt;3)-beta-D-Gal-(1-&gt;3)-alpha-D-GalNAc]-L-Thr-[protein] + CMP-N-acetyl-beta-neuraminate = a 3-O-{alpha-Neu5Ac-(2-&gt;3)-beta-D-Gal-(1-&gt;3)-[alpha-Neu5Ac-(2-&gt;6)]-alpha-D-GalNAc}-L-threonyl-[protein] + CMP + H(+). Functionally, transfers the sialyl group (N-acetyl-alpha-neuraminyl or NeuAc) from CMP-NeuAc onto glycoproteins and glycolipids, forming an alpha-2,6-linkage. Produces branched type disialyl structures by transfer of a sialyl group onto the GalNAc or GlcNAc residue inside backbone core chains having a terminal sialic acid with an alpha-2,3-linkage on Gal. ST6GalNAcVI prefers glycolipids to glycoproteins, predominantly catalyzing the biosynthesis of ganglioside GD1alpha from GM1b. Besides GMb1, MSGG and other glycolipids, it shows activity towards sialyl Lc4Cer generating disialyl Lc4Cer, which can lead to the synthesis of disialyl Lewis a (Le(a)), suggested to be a cancer-associated antigen. Also has activity toward GD1a and GT1b, and can generate DSGG (disialylgalactosylgloboside) from MSGG (monosialylgalactosylgloboside). This Bos taurus (Bovine) protein is Alpha-N-acetylgalactosaminide alpha-2,6-sialyltransferase 6 (ST6GALNAC6).